The chain runs to 128 residues: MSFMKEFREFAMRGNVVDMAVGVIIGGAFGKIVSSLVGDVVMPVLGILTGGVDFKDLKFVLAEAVGETPAVTLNYGLFIQNVFDFIIIAFAIFMMVKGINKLKKPVEEAPKGPTSEELLSEIRDLLKK.

A run of 2 helical transmembrane segments spans residues 10-30 (FAMR…GAFG) and 76-96 (GLFI…FMMV).

It belongs to the MscL family. As to quaternary structure, homopentamer.

It is found in the cell inner membrane. Functionally, channel that opens in response to stretch forces in the membrane lipid bilayer. May participate in the regulation of osmotic pressure changes within the cell. The sequence is that of Large-conductance mechanosensitive channel from Mannheimia succiniciproducens (strain KCTC 0769BP / MBEL55E).